A 195-amino-acid chain; its full sequence is Imidazoleglycerol-phosphate dehydratase (195 aa).

The protein belongs to the imidazoleglycerol-phosphate dehydratase family.

It is found in the cytoplasm. The enzyme catalyses D-erythro-1-(imidazol-4-yl)glycerol 3-phosphate = 3-(imidazol-4-yl)-2-oxopropyl phosphate + H2O. It functions in the pathway amino-acid biosynthesis; L-histidine biosynthesis; L-histidine from 5-phospho-alpha-D-ribose 1-diphosphate: step 6/9. The protein is Imidazoleglycerol-phosphate dehydratase of Burkholderia thailandensis (strain ATCC 700388 / DSM 13276 / CCUG 48851 / CIP 106301 / E264).